The primary structure comprises 161 residues: MSLYQSIVFIARNVVNSITRILHDHPTNSSLITQTYFITPNHSGKNISFHLFHDFKYCSADTRHYSQLIIFPVKENSRPTQVSRPLGGRPHESVFLPKFTRTQNSYCLTRLDRMGFPPPRKASTIMHFFQDDRTVMCSPKDGIPVSSFHIMICFLERRKGN.

This is an uncharacterized protein from Saccharomyces cerevisiae (strain ATCC 204508 / S288c) (Baker's yeast).